Reading from the N-terminus, the 528-residue chain is Glucosidase 2 subunit beta (528 aa).

Positions 1-14 (MLLPLLLLLPMCWA) are cleaved as a signal peptide. The residue at position 24 (serine 24) is a Phosphoserine; by FAM20C. LDL-receptor class A domains are found at residues 37–71 (FTCL…AACP) and 72–113 (NGSF…VICE). 2 disulfide bridges follow: cysteine 39–cysteine 58 and cysteine 56–cysteine 70. Position 49 (aspartate 49) interacts with substrate. Residues glutamine 50, aspartate 53, tyrosine 55, aspartate 57, aspartate 63, and glutamate 64 each contribute to the Ca(2+) site. Aspartate 53 serves as a coordination point for substrate. N-linked (GlcNAc...) asparagine glycosylation occurs at asparagine 72. 3 disulfides stabilise this stretch: cysteine 77-cysteine 99, cysteine 97-cysteine 112, and cysteine 100-cysteine 116. A Phosphoserine; by PKC modification is found at serine 89. Positions 91, 94, 96, 98, 104, and 105 each coordinate Ca(2+). Lysine 166 carries the post-translational modification N6-succinyllysine. Serine 168 is modified (phosphoserine; by FAM20C). 2 EF-hand domains span residues 209-244 (QEQE…DTDG) and 245-290 (DGAL…TDLP). The Ca(2+) site is built by aspartate 222, aspartate 224, aspartate 226, threonine 228, and glutamate 233. Disordered regions lie at residues 234 to 266 (LQTH…TDAT) and 281 to 357 (RSEA…DKMP). Low complexity predominate over residues 247–258 (ALSEAEAQALLS). Residues 312–337 (TEEEEEEEEEEEEEAEEEEEEEDSEE) are compositionally biased toward acidic residues. A compositionally biased stretch (pro residues) spans 338–348 (APPPLSPPQPA). Serine 383 and serine 390 each carry phosphoserine; by PKC. The region spanning 413 to 514 (SQCYELTTNE…ELMTPAACPE (102 aa)) is the MRH domain. A disulfide bridge connects residues cysteine 415 and cysteine 428. Serine 434 carries the phosphoserine; by PKC modification. 2 disulfide bridges follow: cysteine 471–cysteine 500 and cysteine 485–cysteine 512. Asparagine 476 carries N-linked (GlcNAc...) asparagine glycosylation. The short motif at 525–528 (HDEL) is the Prevents secretion from ER element.

As to quaternary structure, heterodimer of a catalytic alpha subunit (GANAB) and a beta subunit (PRKCSH). Binds glycosylated PTPRC.

It is found in the endoplasmic reticulum. It functions in the pathway glycan metabolism; N-glycan metabolism. Functionally, regulatory subunit of glucosidase II that cleaves sequentially the 2 innermost alpha-1,3-linked glucose residues from the Glc(2)Man(9)GlcNAc(2) oligosaccharide precursor of immature glycoproteins. Required for efficient PKD1/Polycystin-1 biogenesis and trafficking to the plasma membrane of the primary cilia. The polypeptide is Glucosidase 2 subunit beta (Homo sapiens (Human)).